A 399-amino-acid polypeptide reads, in one-letter code: Chalcone synthase 2 (399 aa).

Residue Cys166 is part of the active site.

Belongs to the thiolase-like superfamily. Chalcone/stilbene synthases family.

It carries out the reaction (E)-4-coumaroyl-CoA + 3 malonyl-CoA + 3 H(+) = 2',4,4',6'-tetrahydroxychalcone + 3 CO2 + 4 CoA. It functions in the pathway secondary metabolite biosynthesis; flavonoid biosynthesis. Functionally, the primary product of this enzyme is 4,2',4',6'-tetrahydroxychalcone (also termed naringenin-chalcone or chalcone) which can under specific conditions spontaneously isomerize into naringenin. Substrate preference is feruloyl-CoA = caffeoyl-CoA &gt;&gt; cinnamoyl-CoA. The polypeptide is Chalcone synthase 2 (CHS2) (Hordeum vulgare (Barley)).